Reading from the N-terminus, the 313-residue chain is Biotin synthase (313 aa).

In terms of domain architecture, Radical SAM core spans 28–258; it reads NFGNDIELCS…LFPQARLRLS (231 aa). Positions 46, 50, and 53 each coordinate [4Fe-4S] cluster. Positions 90, 121, 181, and 256 each coordinate [2Fe-2S] cluster.

It belongs to the radical SAM superfamily. Biotin synthase family. Homodimer. [4Fe-4S] cluster is required as a cofactor. The cofactor is [2Fe-2S] cluster.

It carries out the reaction (4R,5S)-dethiobiotin + (sulfur carrier)-SH + 2 reduced [2Fe-2S]-[ferredoxin] + 2 S-adenosyl-L-methionine = (sulfur carrier)-H + biotin + 2 5'-deoxyadenosine + 2 L-methionine + 2 oxidized [2Fe-2S]-[ferredoxin]. Its pathway is cofactor biosynthesis; biotin biosynthesis; biotin from 7,8-diaminononanoate: step 2/2. Catalyzes the conversion of dethiobiotin (DTB) to biotin by the insertion of a sulfur atom into dethiobiotin via a radical-based mechanism. The polypeptide is Biotin synthase (Francisella tularensis subsp. tularensis (strain WY96-3418)).